The sequence spans 270 residues: Replication protein A 32 kDa subunit (270 aa).

M1 is modified (N-acetylmethionine). Phosphoserine; by PRKDC occurs at positions 4 and 8. T21 is subject to Phosphothreonine; by PRKDC. The tract at residues 21–41 (TQSPGGFGSPAPSQAEKKSRA) is disordered. The residue at position 23 (S23) is a Phosphoserine; by CDK2. S29 carries the post-translational modification Phosphoserine; by CDK1. Position 33 is a phosphoserine; by PRKDC (S33). Residues K37 and K38 each participate in a glycyl lysine isopeptide (Lys-Gly) (interchain with G-Cter in ubiquitin) cross-link. A DNA-binding region (OB) is located at residues 74–148 (VTIVGIIRHA…KSLVAFKIMP (75 aa)). An interaction with RAD52, TIPIN, UNG and XPA region spans residues 187–270 (GMSEAGNFGG…DDHFKSTDAE (84 aa)).

The protein belongs to the replication factor A protein 2 family. As to quaternary structure, component of the replication protein A complex (RPA/RP-A), a heterotrimeric complex composed of RPA1, RPA2 and RPA3. Interacts with PRPF19; the PRP19-CDC5L complex is recruited to the sites of DNA repair where it ubiquitinates the replication protein A complex (RPA). Interacts with SERTAD3. Interacts with TIPIN. Interacts with TIMELESS. Interacts with PPP4R2; the interaction is direct, DNA damage-dependent and mediates the recruitment of the PP4 catalytic subunit PPP4C. Interacts (hyperphosphorylated) with RAD51. Interacts with SMARCAL1; the interaction is direct and mediates the recruitment to the RPA complex of SMARCAL1. Interacts with RAD52 and XPA; those interactions are direct and associate RAD52 and XPA to the RPA complex. Interacts with FBH1. Interacts with ETAA1; the interaction is direct and promotes ETAA1 recruitment at stalled replication forks. Interacts with RFWD3. Interacts with DDI2. Interacts (in unphosphorylated form via N-terminus) with EIF4EBP3; the interaction enhances EIF4EBP3-mediated inhibition of EIF4E-mediated mRNA nuclear export. Interacts with BRIP1/FANCJ via the RPA1 subunit; following DNA damage they colocalize in foci in the nucleus. Interacts with nuclear UNG (isoform 2); this interaction mediates UNG recruitment to RPA-coated single-stranded DNA at stalled replication forks. Post-translationally, differentially phosphorylated throughout the cell cycle, becoming phosphorylated at the G1-S transition and dephosphorylated in late mitosis. Mainly phosphorylated at Ser-23 and Ser-29, by cyclin A-CDK2 and cyclin B-CDK1, respectively during DNA replication and mitosis. Dephosphorylation may require the serine/threonine-protein phosphatase 4. Phosphorylation at Ser-23 and Ser-29 is a prerequisite for further phosphorylation. Becomes hyperphosphorylated on additional residues including Ser-4, Ser-8, Thr-21 and Ser-33 in response to DNA damage. Hyperphosphorylation is mediated by ATM, ATR and PRKDC. Primarily recruited to DNA repair nuclear foci as a hypophosphorylated form it undergoes subsequent hyperphosphorylation, catalyzed by ATR. Hyperphosphorylation is required for RAD51 recruitment to chromatin and efficient DNA repair. Phosphorylation at Thr-21 depends upon RFWD3 presence. DNA damage-induced 'Lys-63'-linked polyubiquitination by PRPF19 mediates ATRIP recruitment to the RPA complex at sites of DNA damage and activation of ATR. Ubiquitinated by RFWD3 at stalled replication forks in response to DNA damage: ubiquitination by RFWD3 does not lead to degradation by the proteasome and promotes removal of the RPA complex from stalled replication forks, promoting homologous recombination.

Its subcellular location is the nucleus. It is found in the PML body. Its function is as follows. As part of the heterotrimeric replication protein A complex (RPA/RP-A), binds and stabilizes single-stranded DNA intermediates that form during DNA replication or upon DNA stress. It prevents their reannealing and in parallel, recruits and activates different proteins and complexes involved in DNA metabolism. Thereby, it plays an essential role both in DNA replication and the cellular response to DNA damage. In the cellular response to DNA damage, the RPA complex controls DNA repair and DNA damage checkpoint activation. Through recruitment of ATRIP activates the ATR kinase a master regulator of the DNA damage response. It is required for the recruitment of the DNA double-strand break repair factors RAD51 and RAD52 to chromatin in response to DNA damage. Also recruits to sites of DNA damage proteins like XPA and XPG that are involved in nucleotide excision repair and is required for this mechanism of DNA repair. Also plays a role in base excision repair (BER) probably through interaction with UNG. Also recruits SMARCAL1/HARP, which is involved in replication fork restart, to sites of DNA damage. May also play a role in telomere maintenance. RPA stimulates 5'-3' helicase activity of BRIP1/FANCJ. This Homo sapiens (Human) protein is Replication protein A 32 kDa subunit (RPA2).